A 177-amino-acid chain; its full sequence is ATP synthase subunit delta (177 aa).

It belongs to the ATPase delta chain family. F-type ATPases have 2 components, F(1) - the catalytic core - and F(0) - the membrane proton channel. F(1) has five subunits: alpha(3), beta(3), gamma(1), delta(1), epsilon(1). F(0) has three main subunits: a(1), b(2) and c(10-14). The alpha and beta chains form an alternating ring which encloses part of the gamma chain. F(1) is attached to F(0) by a central stalk formed by the gamma and epsilon chains, while a peripheral stalk is formed by the delta and b chains.

It localises to the cell inner membrane. F(1)F(0) ATP synthase produces ATP from ADP in the presence of a proton or sodium gradient. F-type ATPases consist of two structural domains, F(1) containing the extramembraneous catalytic core and F(0) containing the membrane proton channel, linked together by a central stalk and a peripheral stalk. During catalysis, ATP synthesis in the catalytic domain of F(1) is coupled via a rotary mechanism of the central stalk subunits to proton translocation. Functionally, this protein is part of the stalk that links CF(0) to CF(1). It either transmits conformational changes from CF(0) to CF(1) or is implicated in proton conduction. In Janthinobacterium sp. (strain Marseille) (Minibacterium massiliensis), this protein is ATP synthase subunit delta.